Here is a 29-residue protein sequence, read N- to C-terminus: Cyclotide mden-F (29 aa).

The segment at residues 1–29 (GLPICGETCFFGKCNTPKCTCINPICYKN) is a cross-link (cyclopeptide (Gly-Asn)). Disulfide bonds link Cys-5-Cys-19, Cys-9-Cys-21, and Cys-14-Cys-26.

Belongs to the cyclotide family. This is a cyclic peptide.

Probably participates in a plant defense mechanism. This chain is Cyclotide mden-F, found in Melicytus dentatus (Tree violet).